The chain runs to 858 residues: Lysine-specific demethylase JMJ706 (858 aa).

Positions 103–144 (CPVYYPTKEEFEDPIGYIQKIAPVASKYGICKIVSPVSASVP) constitute a JmjN domain. A JmjC domain is found at 250 to 420 (KSNWNLKNFS…LGSVASRRYA (171 aa)). Fe cation is bound by residues H293, E295, and H388. A compositionally biased stretch (basic and acidic residues) spans 737–746 (QHNKRPEDYG). Disordered stretches follow at residues 737 to 791 (QHNK…SAKQ) and 829 to 858 (SSST…WPAI). Residues 829–844 (SSSTNRVVEQGSSGQR) are compositionally biased toward polar residues.

Fe(2+) serves as cofactor.

The protein resides in the nucleus. The catalysed reaction is N(6),N(6),N(6)-trimethyl-L-lysyl(9)-[histone H3] + 2 2-oxoglutarate + 2 O2 = N(6)-methyl-L-lysyl(9)-[histone H3] + 2 formaldehyde + 2 succinate + 2 CO2. Its function is as follows. Histone demethylase that demethylates 'Lys-9' (H3K9me) of histone H3 with a specific activity for H3K9me3 and H3K9me2. No activity on H3K4me3, H3K9me1, H3K27me2 and H3K36me3/2. Involved in the control of floral organ development by demethylating H3K9me3 and H3K9me2 in the promoter regions of DH1 and MADS47. The 'Lys-9' demethylation of these two genes is required for induction of their expression. This chain is Lysine-specific demethylase JMJ706 (JMJ706), found in Oryza sativa subsp. japonica (Rice).